A 120-amino-acid chain; its full sequence is Large ribosomal subunit protein uL18 (120 aa).

It belongs to the universal ribosomal protein uL18 family. As to quaternary structure, part of the 50S ribosomal subunit; part of the 5S rRNA/L5/L18/L25 subcomplex. Contacts the 5S and 23S rRNAs.

Its function is as follows. This is one of the proteins that bind and probably mediate the attachment of the 5S RNA into the large ribosomal subunit, where it forms part of the central protuberance. The protein is Large ribosomal subunit protein uL18 of Exiguobacterium sp. (strain ATCC BAA-1283 / AT1b).